The following is a 50-amino-acid chain: MVRYRCCRSQSRSRCRRRRRRCRRRRRRCCQRRRVRKCCRRTYTLRCRRY.

Disulfide bonds link C7-C15 and C39-C47.

It belongs to the protamine P1 family. In terms of assembly, cross-linked by interchain disulfide bonds around the DNA-helix. In terms of tissue distribution, testis.

It localises to the nucleus. The protein localises to the chromosome. Protamines substitute for histones in the chromatin of sperm during the haploid phase of spermatogenesis. They compact sperm DNA into a highly condensed, stable and inactive complex. The polypeptide is Sperm protamine P1 (PRM1) (Oryctolagus cuniculus (Rabbit)).